The sequence spans 906 residues: Protein translocase subunit SecA (906 aa).

ATP contacts are provided by residues Q89, G107–T111, and D502. Zn(2+)-binding residues include C890, C892, C901, and H902.

This sequence belongs to the SecA family. In terms of assembly, monomer and homodimer. Part of the essential Sec protein translocation apparatus which comprises SecA, SecYEG and auxiliary proteins SecDF-YajC and YidC. Requires Zn(2+) as cofactor.

It is found in the cell inner membrane. The protein resides in the cytoplasm. The enzyme catalyses ATP + H2O + cellular proteinSide 1 = ADP + phosphate + cellular proteinSide 2.. In terms of biological role, part of the Sec protein translocase complex. Interacts with the SecYEG preprotein conducting channel. Has a central role in coupling the hydrolysis of ATP to the transfer of proteins into and across the cell membrane, serving both as a receptor for the preprotein-SecB complex and as an ATP-driven molecular motor driving the stepwise translocation of polypeptide chains across the membrane. This is Protein translocase subunit SecA from Bartonella quintana (strain Toulouse) (Rochalimaea quintana).